Reading from the N-terminus, the 68-residue chain is Large ribosomal subunit protein bL31 (68 aa).

Positions 17, 19, 37, and 40 each coordinate Zn(2+).

This sequence belongs to the bacterial ribosomal protein bL31 family. Type A subfamily. Part of the 50S ribosomal subunit. It depends on Zn(2+) as a cofactor.

In terms of biological role, binds the 23S rRNA. The polypeptide is Large ribosomal subunit protein bL31 (Dehalococcoides mccartyi (strain CBDB1)).